The chain runs to 284 residues: 2,3,4,5-tetrahydropyridine-2,6-dicarboxylate N-succinyltransferase (284 aa).

Residues R111 and D148 each coordinate substrate.

This sequence belongs to the transferase hexapeptide repeat family. As to quaternary structure, homotrimer.

Its subcellular location is the cytoplasm. The catalysed reaction is (S)-2,3,4,5-tetrahydrodipicolinate + succinyl-CoA + H2O = (S)-2-succinylamino-6-oxoheptanedioate + CoA. It functions in the pathway amino-acid biosynthesis; L-lysine biosynthesis via DAP pathway; LL-2,6-diaminopimelate from (S)-tetrahydrodipicolinate (succinylase route): step 1/3. The sequence is that of 2,3,4,5-tetrahydropyridine-2,6-dicarboxylate N-succinyltransferase from Mesorhizobium japonicum (strain LMG 29417 / CECT 9101 / MAFF 303099) (Mesorhizobium loti (strain MAFF 303099)).